A 281-amino-acid chain; its full sequence is LC-AMP precursor 3 (281 aa).

The signal sequence occupies residues Met1–Ala19. Residues Arg20 to Arg56 constitute a propeptide that is removed on maturation. Residue Leu74 is modified to Leucine amide. Positions Gly75–Arg89 are excised as a propeptide. Serine amide is present on Ser114. Positions Gly115–Arg129 are excised as a propeptide. Leucine amide is present on Leu147. A propeptide spanning residues Gly148 to Arg162 is cleaved from the precursor. Leucine amide is present on Leu180. Positions Gly181–Arg195 are excised as a propeptide. Leu213 is subject to Leucine amide. A propeptide spanning residues Gly214–Arg228 is cleaved from the precursor. A Leucine amide modification is found at Leu246. Residues Gly247–Arg261 constitute a propeptide that is removed on maturation. Residue Leu279 is modified to Leucine amide.

As to expression, expressed by the venom gland.

It localises to the secreted. In terms of biological role, antimicrobial peptide that acts by influencing bacterial cell membrane permeability at low concentrations and by directly disrupting structure-function at high concentrations. Shows activity against Gram-negative bacteria (S.typhimurium CGMCC 1.1174 (MIC=2.5 uM), E.coli CCTCC AB 2018675 (MIC=5 uM), S.dysenteriae CGMCC 1.1869 (MIC=2.5 uM), P.aeruginosa CGMCC 1.596 (MIC 5-10 uM), K.pneumoniae (MIC=10 uM), A.baumannii (MIC=5-10 uM)), and Gram-positive bacteria (S.aureus CMCC 26003 or MRSA ATCC 43300 (MIC=5 uM), and E.faecium (MIC=2.5-5 uM)). Inhibits biofilm formation of E.coli and S.aureus in a dose-dependent manner and disrupts established biofilms. Demonstrates minimal bacterial resistance, excellent stability, negligible mammalian cell toxicity, low hemolytic activity, and appropriate selectivity for both normal and tumor cells. When combined with traditional antibiotics, exhibits additive or synergistic therapeutic effects. In vivo, in a neutropenic mouse thigh infection model, exhibits a therapeutic effect in inhibiting bacterial proliferation. This is LC-AMP precursor 3 from Lycosa coelestis (Wolf spider).